We begin with the raw amino-acid sequence, 140 residues long: Transcription antitermination protein NusB (140 aa).

The protein belongs to the NusB family.

Functionally, involved in transcription antitermination. Required for transcription of ribosomal RNA (rRNA) genes. Binds specifically to the boxA antiterminator sequence of the ribosomal RNA (rrn) operons. The polypeptide is Transcription antitermination protein NusB (Leptospira biflexa serovar Patoc (strain Patoc 1 / Ames)).